A 1206-amino-acid polypeptide reads, in one-letter code: MDTFPSLFLYSLTIQNSNYVQSSCAASLSGKKAQEIVIATESRLLIYKVDATDGRMNCILNQNCFGIIRNVAPLRLTGFKRDYLVVTSDSGRITILEYNVEKNKLVPIYQETFGKSGIRRVVPGEYLAIDAKGRAAMIASVEKNKLVYVLNRDSEANLTISSPLEAHKANNICFHLIGLDTGYANPIFAALEVDYSEIDHDSTREAFTSSEKVLSYYELDLGLNHVVKRWSKVVDRNSYMLIPVPGGNDGPSGTLVISNGWISYRHLQKAFHQIPILRRQAASANAISTPWNQVNSNSANDGPLIVSAVLHKMKGSFFYLLQTGDGDLLKLTIEHDGQGNVVELRLKYFDTVPLAVQLNILKTGFLFVATEFGNHQLYQFENLGIDDDELEITSLDFQAQDNEVGTKNVHFGVRGLQNLSLVEEIPSLYSLTDTLLMKAPSSGEANQLYTVCGRGSNSSLRQLRRGLETTEIVASELPGAPIAIWTLKLNQTDVYDSYIILSFTNGTLVLSIGETVEEISDSGFLSSVSTLNARQMGRDSLVQIHPKGIRYIRANKQTSEWKLPQDVYVVQSAINDMQIVVALSNGELVYFEMSDDVEGGQLNEYQERKTLTANVTSLALGPVQEGSRRSNFMCLACDDATVRVLSLDLYTTLENLSVQALSSPANSLCIIPMNVNGVSTLYLHIGLMNGVYLRTVIDVTSGQLLDTRTRFLGPRAVKIYPITMKNQNTVLAVSSRTFLAYSYQQNLQLSPIAYSAIDHASSFASEQCPEGIVAIQKNTLKIFTVDSLQDDLKSDIYPLICTPRKIVKHPNFPVLYILQSERNFDSFKYAQENGDVGSSYTKEKQNEHTSKSWVSFISVFDMISKKIIHESPLGDNEAAFSMTAAFFKNRDEFFLVAGSATNMDLECRTCSHGNFRVYRFHDEGKKLELISHTEIDGIPMALTPFQGRMLAGVGRFLRIYDLGNKKMLRKGELSAVPLFITHITVQASRIVVADSQYSVRFVVYKPEDNHLLTFADDTIHRWTTTNVLVDYDTLAGGDKFGNIWLLRCPEHVSKLADEENSESKLIHEKPFLNSTPHKLDLMAHFFTNDIPTSLQKVQLVEGAREVLLWTGLLGTVGVFTPFINQEDVRFFQQLEFLLRKECPPLAGRDHLAYRSYYAPVKCVIDGDLCEMYYSLPHPVQEMIANELDRTIAEVSKKIEDFRVRSF.

Belongs to the RSE1 family. As to quaternary structure, belongs to the 40S cdc5-associated complex (or cwf complex), a spliceosome sub-complex reminiscent of a late-stage spliceosome composed of the U2, U5 and U6 snRNAs and at least brr2, cdc5, cwf2/prp3, cwf3/syf1, cwf4/syf3, cwf5/ecm2, spp42/cwf6, cwf7/spf27, cwf8, cwf9, cwf10, cwf11, cwf12, prp45/cwf13, cwf14, cwf15, cwf16, cwf17, cwf18, cwf19, cwf20, cwf21, cwf22, cwf23, cwf24, cwf25, cwf26, cyp7/cwf27, cwf28, cwf29/ist3, lea1, msl1, prp5/cwf1, prp10, prp12/sap130, prp17, prp22, sap61, sap62, sap114, sap145, slu7, smb1, smd1, smd3, smf1, smg1 and syf2.

Its subcellular location is the nucleus. Functionally, involved in mRNA splicing and G2/M transition. This chain is Pre-mRNA-splicing factor prp12 (prp12), found in Schizosaccharomyces pombe (strain 972 / ATCC 24843) (Fission yeast).